A 200-amino-acid polypeptide reads, in one-letter code: Protein Syd (200 aa).

It belongs to the Syd family.

Its subcellular location is the cell inner membrane. In terms of biological role, interacts with the SecY protein in vivo. May bind preferentially to an uncomplexed state of SecY, thus functioning either as a chelating agent for excess SecY in the cell or as a regulatory factor that negatively controls the translocase function. The protein is Protein Syd of Colwellia psychrerythraea (strain 34H / ATCC BAA-681) (Vibrio psychroerythus).